The following is a 193-amino-acid chain: NADH-quinone oxidoreductase subunit B (193 aa).

[4Fe-4S] cluster-binding residues include Cys-72, Cys-73, Cys-137, and Cys-167.

This sequence belongs to the complex I 20 kDa subunit family. NDH-1 is composed of 14 different subunits. Subunits NuoB, C, D, E, F, and G constitute the peripheral sector of the complex. The cofactor is [4Fe-4S] cluster.

It is found in the cell inner membrane. The catalysed reaction is a quinone + NADH + 5 H(+)(in) = a quinol + NAD(+) + 4 H(+)(out). Functionally, NDH-1 shuttles electrons from NADH, via FMN and iron-sulfur (Fe-S) centers, to quinones in the respiratory chain. Couples the redox reaction to proton translocation (for every two electrons transferred, four hydrogen ions are translocated across the cytoplasmic membrane), and thus conserves the redox energy in a proton gradient. This Brucella anthropi (strain ATCC 49188 / DSM 6882 / CCUG 24695 / JCM 21032 / LMG 3331 / NBRC 15819 / NCTC 12168 / Alc 37) (Ochrobactrum anthropi) protein is NADH-quinone oxidoreductase subunit B.